The following is an 87-amino-acid chain: Small ribosomal subunit protein eS21B (87 aa).

Methionine 1 carries the post-translational modification N-acetylmethionine.

The protein belongs to the eukaryotic ribosomal protein eS21 family. Component of the small ribosomal subunit (SSU). Mature yeast ribosomes consist of a small (40S) and a large (60S) subunit. The 40S small subunit contains 1 molecule of ribosomal RNA (18S rRNA) and 33 different proteins (encoded by 57 genes). The large 60S subunit contains 3 rRNA molecules (25S, 5.8S and 5S rRNA) and 46 different proteins (encoded by 81 genes). In terms of processing, N-terminally acetylated by acetyltransferase NatB.

It is found in the cytoplasm. In terms of biological role, component of the ribosome, a large ribonucleoprotein complex responsible for the synthesis of proteins in the cell. The small ribosomal subunit (SSU) binds messenger RNAs (mRNAs) and translates the encoded message by selecting cognate aminoacyl-transfer RNA (tRNA) molecules. The large subunit (LSU) contains the ribosomal catalytic site termed the peptidyl transferase center (PTC), which catalyzes the formation of peptide bonds, thereby polymerizing the amino acids delivered by tRNAs into a polypeptide chain. The nascent polypeptides leave the ribosome through a tunnel in the LSU and interact with protein factors that function in enzymatic processing, targeting, and the membrane insertion of nascent chains at the exit of the ribosomal tunnel. eS21 is required for the processing of the 20S rRNA-precursor to mature 18S rRNA in a late step of the maturation of 40S ribosomal subunits. Has a physiological role leading to 18S rRNA stability. This chain is Small ribosomal subunit protein eS21B, found in Saccharomyces cerevisiae (strain ATCC 204508 / S288c) (Baker's yeast).